Here is a 273-residue protein sequence, read N- to C-terminus: Dermonecrotic toxin LhSicTox-alphaIA2bvi (273 aa).

Residue H5 is part of the active site. Mg(2+)-binding residues include E25 and D27. The Nucleophile role is filled by H41. Disulfide bonds link C45–C51 and C47–C190. Mg(2+) is bound at residue D85.

It belongs to the arthropod phospholipase D family. Class II subfamily. It depends on Mg(2+) as a cofactor. In terms of tissue distribution, expressed by the venom gland.

The protein localises to the secreted. The enzyme catalyses an N-(acyl)-sphingosylphosphocholine = an N-(acyl)-sphingosyl-1,3-cyclic phosphate + choline. The catalysed reaction is an N-(acyl)-sphingosylphosphoethanolamine = an N-(acyl)-sphingosyl-1,3-cyclic phosphate + ethanolamine. It catalyses the reaction a 1-acyl-sn-glycero-3-phosphocholine = a 1-acyl-sn-glycero-2,3-cyclic phosphate + choline. It carries out the reaction a 1-acyl-sn-glycero-3-phosphoethanolamine = a 1-acyl-sn-glycero-2,3-cyclic phosphate + ethanolamine. Its function is as follows. Dermonecrotic toxins cleave the phosphodiester linkage between the phosphate and headgroup of certain phospholipids (sphingolipid and lysolipid substrates), forming an alcohol (often choline) and a cyclic phosphate. This toxin acts on sphingomyelin (SM). It may also act on ceramide phosphoethanolamine (CPE), lysophosphatidylcholine (LPC) and lysophosphatidylethanolamine (LPE), but not on lysophosphatidylserine (LPS), and lysophosphatidylglycerol (LPG). It acts by transphosphatidylation, releasing exclusively cyclic phosphate products as second products. Induces dermonecrosis, hemolysis, increased vascular permeability, edema, inflammatory response, and platelet aggregation. This chain is Dermonecrotic toxin LhSicTox-alphaIA2bvi, found in Loxosceles hirsuta (Recluse spider).